Reading from the N-terminus, the 370-residue chain is ATP synthase gamma chain, chloroplastic (370 aa).

Residues 1–55 (MKFFCVAGLLASAAAFQAQPAAFTTYSPAVGGATSNVFSESSSPAHRNRRATIVM) constitute a chloroplast transit peptide. Cysteine 145 is an active-site residue.

The protein belongs to the ATPase gamma chain family. As to quaternary structure, F-type ATPases have 2 components, CF(1) - the catalytic core - and CF(0) - the membrane proton channel. CF(1) has five subunits: alpha(3), beta(3), gamma(1), delta(1), epsilon(1). CF(0) has four main subunits: a, b, b' and c.

The protein localises to the plastid. It is found in the chloroplast thylakoid membrane. Its function is as follows. Produces ATP from ADP in the presence of a proton gradient across the membrane. The gamma chain is believed to be important in regulating ATPase activity and the flow of protons through the CF(0) complex. The polypeptide is ATP synthase gamma chain, chloroplastic (ATPC) (Trieres chinensis (Marine centric diatom)).